We begin with the raw amino-acid sequence, 266 residues long: Signal peptidase I (266 aa).

Residues 1 to 20 (MQTDNTKSNTNKTAKQEWGS) are Cytoplasmic-facing. A helical membrane pass occupies residues 21-41 (FAFVICIALLIRILIMEPFTV). Residues 42–266 (PTGSMKATIL…IFRNLYSTDE (225 aa)) lie on the Periplasmic side of the membrane. Residues serine 45 and lysine 108 contribute to the active site.

It belongs to the peptidase S26 family.

The protein resides in the cell inner membrane. The catalysed reaction is Cleavage of hydrophobic, N-terminal signal or leader sequences from secreted and periplasmic proteins.. The sequence is that of Signal peptidase I (lepB) from Rickettsia felis (strain ATCC VR-1525 / URRWXCal2) (Rickettsia azadi).